We begin with the raw amino-acid sequence, 126 residues long: Holo-[acyl-carrier-protein] synthase (126 aa).

Residues Asp-9 and Glu-58 each coordinate Mg(2+).

This sequence belongs to the P-Pant transferase superfamily. AcpS family. It depends on Mg(2+) as a cofactor.

Its subcellular location is the cytoplasm. It carries out the reaction apo-[ACP] + CoA = holo-[ACP] + adenosine 3',5'-bisphosphate + H(+). Functionally, transfers the 4'-phosphopantetheine moiety from coenzyme A to a Ser of acyl-carrier-protein. This chain is Holo-[acyl-carrier-protein] synthase, found in Cronobacter sakazakii (strain ATCC BAA-894) (Enterobacter sakazakii).